Consider the following 1226-residue polypeptide: Integrin alpha pat-2 (1226 aa).

Residues 1–25 (MREGSFPRRIGLLLGLLGLLAGVAT) form the signal peptide. Residues 26–1154 (FNIDTKNVVV…IASEEGRDLP (1129 aa)) are Extracellular-facing. 7 FG-GAP repeats span residues 27–94 (NIDT…TCRE), 108–171 (NGSH…NAEE), 178–233 (EPAR…TDRP), 234–290 (NTEY…MMIN), 291–345 (LTDE…KPQY), 362–421 (GKQI…GVRE), and 425–488 (QKIE…PESA). Residues Asn108, Asn228, and Asn290 are each glycosylated (N-linked (GlcNAc...) asparagine). A glycan (N-linked (GlcNAc...) asparagine) is linked at Asn608. The Cell attachment site signature appears at 620-622 (RGD). N-linked (GlcNAc...) asparagine glycosylation occurs at Asn679. The segment at 709–733 (SVGGDGSKSAPACSPTSDEPDSDGK) is disordered. Residues Asn775 and Asn819 are each glycosylated (N-linked (GlcNAc...) asparagine). Disordered stretches follow at residues 898 to 958 (LRIT…HVYE) and 982 to 1040 (DYEY…ARFS). A compositionally biased stretch (acidic residues) spans 920–931 (REEDDESYEDET). A compositionally biased stretch (low complexity) spans 932–951 (TTQSQSTRHQSTQHQTHHQS). The segment covering 985 to 1005 (YIPDDQEYDGDDFEEEDDEDF) has biased composition (acidic residues). Residues 1010 to 1026 (SKRVKRNPTPKKKKKGG) show a composition bias toward basic residues. Positions 1027 to 1040 (EHRGEPRSDKARFS) are enriched in basic and acidic residues. Residues 1155–1177 (WWLYLLAILIGLAILILLILLLW) form a helical membrane-spanning segment. The Cytoplasmic portion of the chain corresponds to 1178-1226 (RCGFFKRNRPPTEHAELRADRQPNAQYADSQSRYTSQDQYNQGRHGQML). The interval 1191–1226 (HAELRADRQPNAQYADSQSRYTSQDQYNQGRHGQML) is disordered. Residues 1200-1226 (PNAQYADSQSRYTSQDQYNQGRHGQML) are compositionally biased toward polar residues.

It belongs to the integrin alpha chain family. In terms of assembly, heterodimer of an alpha and a beta subunit. Interacts with beta subunit pat-3. Interacts with dep-1. Component of an integrin containing attachment complex, composed of at least pat-2, pat-3, pat-4, pat-6, unc-52, unc-97 and unc-112. In terms of tissue distribution, expressed in body-wall muscle cells, distal tip cells, and vulval tissue.

Its subcellular location is the membrane. Functionally, required for muscle development probably through the regulation of the actin-myosin cytoskeleton. Component of an integrin containing attachment complex, which is required for muscle maintenance. During the formation of neuromuscular junctions at the larval stage, negatively regulates membrane protrusion from body wall muscles, probably through lamins such as epi-1, lam-2 and unc-52. Required for distal tip cell migration and dorsal pathfinding. Required for egg-laying. May play a role in cell motility and cell-cell interactions. Plays a role in vulval development. Probably within the alpha pat-2/beta pat-3 integrin receptor complex, plays a role in the negative regulation of let-23 signaling and vulval induction. This is probably partly by restricting the mobility of the let-23 receptor on the plasma membrane of vulval cells which thereby attenuates let-23 signaling. This Caenorhabditis elegans protein is Integrin alpha pat-2.